A 473-amino-acid chain; its full sequence is H(+)/Cl(-) exchange transporter ClcA (473 aa).

At 1–32 (MKTDTSTFLAQQIVRLRRRDQIRRLMQRDKTP) the chain is on the cytoplasmic side. The chain crosses the membrane as a helical span at residues 33–69 (LAILFMAAVVGTLTGLVGVAFEKAVSWVQNMRIGALV). At 70–76 (QVADHAF) the chain is on the periplasmic side. The chain crosses the membrane as a helical span at residues 77 to 100 (LLWPLAFILSALLAMVGYFLVRKF). The Selectivity filter part_1 signature appears at 106 to 110 (GSGIP). Ser107 lines the chloride pocket. The segment at residues 109–116 (IPEIEGAL) is an intramembrane region (helical). Residues 117 to 123 (EELRPVR) lie on the Cytoplasmic side of the membrane. Transmembrane regions (helical) follow at residues 124 to 141 (WWRV…TLGA) and 148 to 166 (EGPT…LDVF). Residues 146-150 (GREGP) carry the Selectivity filter part_2 motif. Topologically, residues 167-176 (RMRSAEARHT) are cytoplasmic. The segment at residues 177-189 (LLATGAAAGLSAA) is an intramembrane region (helical). An intramembrane region (note=Loop between two helices) is located at residues 190 to 192 (FNA). The helical intramembrane region spans 193–201 (PLAGILFII). The Cytoplasmic portion of the chain corresponds to 202-214 (EEMRPQFRYNLIS). A helical transmembrane segment spans residues 215 to 232 (IKAVFTGVIMSSIVFRIF). The Periplasmic portion of the chain corresponds to 233–252 (NGEAPIIEVGKLSDAPVNTL). Residues 253 to 281 (WLYLILGIIFGCVGPVFNSLVLRTQDMFQ) traverse the membrane as a helical segment. The Cytoplasmic segment spans residues 282 to 287 (RFHGGE). A helical transmembrane segment spans residues 288–308 (IKKWVLMGGAIGGLCGILGLI). Residues 309-329 (EPAAAGGGFNLIPIAAAGNFS) are Periplasmic-facing. Residues 330 to 349 (VGLLLFIFITRVVTTLLCFS) form a helical membrane-spanning segment. At 350–354 (SGAPG) the chain is on the cytoplasmic side. A Selectivity filter part_3 motif is present at residues 355 to 359 (GIFAP). A helical membrane pass occupies residues 355 to 378 (GIFAPMLALGTLLGTAFGMAAAVL). Chloride contacts are provided by Ile356 and Phe357. Residues 379-386 (FPQYHLEA) lie on the Periplasmic side of the membrane. Residues 387 to 401 (GTFAIAGMGALMAAS) constitute an intramembrane region (helical). Positions 402 to 404 (VRA) form an intramembrane region, note=Loop between two helices. An intramembrane region (helical) is located at residues 405 to 416 (PLTGIVLVLEMT). Positions 417-421 (DNYQL) form an intramembrane region, note=Loop between two helices. The chain crosses the membrane as a helical span at residues 422–438 (ILPMIITCLGATLLAQF). The Cytoplasmic segment spans residues 439–473 (LGGKPLYSTILARTLAKQDAEQAEKNQNAPADENT). Tyr445 contacts chloride.

This sequence belongs to the chloride channel (TC 2.A.49) family. ClcA subfamily. In terms of assembly, homodimer.

It localises to the cell inner membrane. The enzyme catalyses 2 chloride(in) + H(+)(out) = 2 chloride(out) + H(+)(in). Proton-coupled chloride transporter. Functions as antiport system and exchanges two chloride ions for 1 proton. Probably acts as an electrical shunt for an outwardly-directed proton pump that is linked to amino acid decarboxylation, as part of the extreme acid resistance (XAR) response. In Salmonella typhimurium (strain LT2 / SGSC1412 / ATCC 700720), this protein is H(+)/Cl(-) exchange transporter ClcA (clcA).